Here is a 149-residue protein sequence, read N- to C-terminus: Nucleoside diphosphate kinase (149 aa).

ATP is bound by residues lysine 9, phenylalanine 57, arginine 85, threonine 91, arginine 102, and asparagine 112. The active-site Pros-phosphohistidine intermediate is the histidine 115.

This sequence belongs to the NDK family. As to quaternary structure, homotetramer. Mg(2+) serves as cofactor.

It is found in the cytoplasm. The enzyme catalyses a 2'-deoxyribonucleoside 5'-diphosphate + ATP = a 2'-deoxyribonucleoside 5'-triphosphate + ADP. It catalyses the reaction a ribonucleoside 5'-diphosphate + ATP = a ribonucleoside 5'-triphosphate + ADP. Its function is as follows. Major role in the synthesis of nucleoside triphosphates other than ATP. The ATP gamma phosphate is transferred to the NDP beta phosphate via a ping-pong mechanism, using a phosphorylated active-site intermediate. This Staphylococcus haemolyticus (strain JCSC1435) protein is Nucleoside diphosphate kinase.